We begin with the raw amino-acid sequence, 347 residues long: Selenide, water dikinase (347 aa).

Residue cysteine 17 is part of the active site. Residues lysine 20 and 48–50 each bind ATP; that span reads TRD. Mg(2+) is bound at residue aspartate 51. ATP contacts are provided by residues aspartate 68, aspartate 91, and 139 to 141; that span reads GHS. Aspartate 91 contributes to the Mg(2+) binding site. Aspartate 227 lines the Mg(2+) pocket.

Belongs to the selenophosphate synthase 1 family. Class I subfamily. Homodimer. Mg(2+) is required as a cofactor.

The enzyme catalyses hydrogenselenide + ATP + H2O = selenophosphate + AMP + phosphate + 2 H(+). Its function is as follows. Synthesizes selenophosphate from selenide and ATP. The protein is Selenide, water dikinase of Escherichia coli O157:H7.